The sequence spans 181 residues: Adenylate kinase 2 (181 aa).

10–15 is an ATP binding site; sequence GSGKST. An NMP region spans residues 30–59; sequence SMGGILREAIANATPLGIKAKPYVERGDLL. AMP is bound by residues Arg36, 57–59, 85–88, and Gln92; these read DLL and GYPR. Positions 126-132 are LID; it reads NRSLFDD. Arg127 contributes to the ATP binding site. Arg140 lines the AMP pocket. Pro168 provides a ligand contact to ATP.

The protein belongs to the adenylate kinase family. In terms of assembly, monomer.

It is found in the cytoplasm. The catalysed reaction is AMP + ATP = 2 ADP. It participates in purine metabolism; AMP biosynthesis via salvage pathway; AMP from ADP: step 1/1. Functionally, catalyzes the reversible transfer of the terminal phosphate group between ATP and AMP. Plays an important role in cellular energy homeostasis and in adenine nucleotide metabolism. This is Adenylate kinase 2 from Synechocystis sp. (strain ATCC 27184 / PCC 6803 / Kazusa).